A 267-amino-acid polypeptide reads, in one-letter code: Phosphoethanolamine/phosphocholine phosphatase (267 aa).

The Nucleophile role is filled by D32. 2 residues coordinate Mg(2+): D32 and D34. D34 serves as the catalytic Proton donor. Residues D43 and D123 each contribute to the substrate site. D203 provides a ligand contact to Mg(2+).

The protein belongs to the HAD-like hydrolase superfamily. PHOSPHO family. Mg(2+) serves as cofactor. Expressed at sites of mineralization in bone and cartilage. Highly expressed in osteoblast cell line SaOS-2 which produces a mineralized matrix, but not in MG-63 cell line, which do not mineralize.

Its subcellular location is the extracellular vesicle. It catalyses the reaction phosphoethanolamine + H2O = ethanolamine + phosphate. The catalysed reaction is phosphocholine + H2O = choline + phosphate. Its function is as follows. Phosphatase that has a high activity toward phosphoethanolamine (PEA) and phosphocholine (PCho). Involved in the generation of inorganic phosphate for bone mineralization. Acts in a non-redundant manner with PHOSPHO1 in skeletal mineralization: while PHOSPHO1 mediates the initiation of hydroxyapatite crystallization in the matrix vesicles (MVs), ALPL/TNAP catalyzes the spread of hydroxyapatite crystallization in the extracellular matrix. The sequence is that of Phosphoethanolamine/phosphocholine phosphatase from Homo sapiens (Human).